Consider the following 514-residue polypeptide: Calcium-binding mitochondrial carrier protein SCaMC-2 (514 aa).

The Mitochondrial intermembrane segment spans residues 1–234 (MARPRSLVSP…EKQTGMWWRH (234 aa)). EF-hand domains are found at residues 56 to 91 (EHERRLQILFQELDVNKDGAICINDLAVGLKRLGVH), 92 to 122 (RTELELRKIVKAGDKDQDGQLDFDEFVHYLR), 123 to 158 (DHEKKLRLVFKSLDKKNDGRIDAQEIMQSLRDLGVN), and 159 to 194 (ISEQQAEKILKSMDKNGTMTIDWNEWRDYHLLHSAE). Ca(2+) is bound by residues Asp69, Asn71, Asp73, Asp80, Asp105, Asp107, Asp109, Gln111, and Glu116. Solcar repeat units lie at residues 229–315 (GMWW…IKRI), 323–408 (LGIH…LKNA), and 420–508 (PGVF…LKLT). Residues 235–252 (LVAGGGAGAVSRTCTAPL) traverse the membrane as a helical segment. Residues 253-289 (DRLKVLMQVHASRSNNMSILGGFTHMIREGGFRSLWR) lie on the Mitochondrial matrix side of the membrane. The helical transmembrane segment at 290 to 309 (GNGINVIKIAPESAIKFMAY) threads the bilayer. At 310 to 332 (EQIKRIIGSNQETLGIHERFVAG) the chain is on the mitochondrial intermembrane side. The helical transmembrane segment at 333 to 346 (SLAGVIAQSSIYPM) threads the bilayer. The Mitochondrial matrix portion of the chain corresponds to 347-382 (EVLKTRMALRKTGQYQGVLDCGKKILLQEGLSAFYK). A helical transmembrane segment spans residues 383-402 (GYVPNMLGIIPYAGIDLAVY). The Mitochondrial intermembrane portion of the chain corresponds to 403–425 (ETLKNAWLQRYATSSADPGVFVL). The helical transmembrane segment at 426–443 (LACGTVSSTCGQLASYPL) threads the bilayer. The Mitochondrial matrix portion of the chain corresponds to 444–482 (ALVRTRMQAEASVEGAPQMTMSKLFKHIVKTEGAFGLYR). Residues 483-502 (GLAPNFMKVIPAVSISYVVY) form a helical membrane-spanning segment. Topologically, residues 503 to 514 (ENLKLTLGVQSR) are mitochondrial intermembrane.

It belongs to the mitochondrial carrier (TC 2.A.29) family.

Its subcellular location is the mitochondrion inner membrane. In terms of biological role, calcium-dependent mitochondrial solute carrier. The protein is Calcium-binding mitochondrial carrier protein SCaMC-2 (slc25a25) of Xenopus laevis (African clawed frog).